A 271-amino-acid polypeptide reads, in one-letter code: NADH-quinone oxidoreductase subunit B (271 aa).

[4Fe-4S] cluster-binding residues include cysteine 37, cysteine 38, cysteine 103, and cysteine 132. The interval 227–271 is disordered; that stretch reads LAPPSVFGRAKRIPVDPKPSDEARAHGPGPTTESIGDVDGPDRGI. Positions 239-251 are enriched in basic and acidic residues; sequence IPVDPKPSDEARA.

This sequence belongs to the complex I 20 kDa subunit family. In terms of assembly, NDH-1 is composed of 14 different subunits. Subunits NuoB, C, D, E, F, and G constitute the peripheral sector of the complex. The cofactor is [4Fe-4S] cluster.

The protein localises to the cell membrane. It catalyses the reaction a quinone + NADH + 5 H(+)(in) = a quinol + NAD(+) + 4 H(+)(out). Its function is as follows. NDH-1 shuttles electrons from NADH, via FMN and iron-sulfur (Fe-S) centers, to quinones in the respiratory chain. The immediate electron acceptor for the enzyme in this species is believed to be a menaquinone. Couples the redox reaction to proton translocation (for every two electrons transferred, four hydrogen ions are translocated across the cytoplasmic membrane), and thus conserves the redox energy in a proton gradient. The protein is NADH-quinone oxidoreductase subunit B of Frankia casuarinae (strain DSM 45818 / CECT 9043 / HFP020203 / CcI3).